The primary structure comprises 80 residues: Small ribosomal subunit protein bS18 (80 aa).

The protein belongs to the bacterial ribosomal protein bS18 family. Part of the 30S ribosomal subunit. Forms a tight heterodimer with protein bS6.

In terms of biological role, binds as a heterodimer with protein bS6 to the central domain of the 16S rRNA, where it helps stabilize the platform of the 30S subunit. The chain is Small ribosomal subunit protein bS18 from Staphylococcus saprophyticus subsp. saprophyticus (strain ATCC 15305 / DSM 20229 / NCIMB 8711 / NCTC 7292 / S-41).